The chain runs to 336 residues: Inositol 2-dehydrogenase (336 aa).

The protein belongs to the Gfo/Idh/MocA family. In terms of assembly, homotetramer.

It catalyses the reaction myo-inositol + NAD(+) = scyllo-inosose + NADH + H(+). Its function is as follows. Involved in the oxidation of myo-inositol (MI) to 2-keto-myo-inositol (2KMI or 2-inosose). The sequence is that of Inositol 2-dehydrogenase from Paracoccus denitrificans (strain Pd 1222).